The chain runs to 596 residues: ATP-dependent lipid A-core flippase (596 aa).

The next 6 membrane-spanning stretches (helical) occupy residues valine 34–isoleucine 54, alanine 80–leucine 100, alanine 138–valine 158, valine 164–isoleucine 184, glutamine 263–valine 283, and valine 292–leucine 312. Residues valine 38 to arginine 321 form the ABC transmembrane type-1 domain. The ABC transporter domain occupies isoleucine 353–isoleucine 589. Glycine 389–threonine 396 serves as a coordination point for ATP.

The protein belongs to the ABC transporter superfamily. Lipid exporter (TC 3.A.1.106) family. Homodimer.

The protein resides in the cell inner membrane. It carries out the reaction ATP + H2O + lipid A-core oligosaccharideSide 1 = ADP + phosphate + lipid A-core oligosaccharideSide 2.. Functionally, involved in lipopolysaccharide (LPS) biosynthesis. Translocates lipid A-core from the inner to the outer leaflet of the inner membrane. Transmembrane domains (TMD) form a pore in the inner membrane and the ATP-binding domain (NBD) is responsible for energy generation. This Burkholderia mallei (strain ATCC 23344) protein is ATP-dependent lipid A-core flippase.